A 170-amino-acid polypeptide reads, in one-letter code: Myosin regulatory light chain 11 (170 aa).

Ala-2 carries the n,N,N-trimethylalanine modification. Phosphoserine is present on residues Ser-16 and Ser-17. Phosphothreonine is present on residues Thr-26 and Thr-36. One can recognise an EF-hand 1 domain in the interval 26 to 61; it reads TQIQEFKEAFTVIDQNRDGIIDKEDLRDTFAAMGRL. 4 residues coordinate Ca(2+): Asp-39, Asn-41, Asp-43, and Asp-50. At Ser-76 the chain carries Phosphoserine. 2 EF-hand domains span residues 96-131 and 132-167; these read DPED…QCDR and FSQE…GDAK. Position 102 is a phosphothreonine (Thr-102).

As to quaternary structure, myosin is a hexamer of 2 heavy chains and 4 light chains. In terms of processing, n,N,N-trimethylalanine found in this myosin light chain would not have been detected in the N-terminal tryptic peptide in PubMed:863872 and PubMed:352892 because it would remain trimethylated and ninhydrin negative after hydrolysis.

In terms of biological role, myosin regulatory subunit that plays an essential role to maintain muscle integrity during early development. Plays a role in muscle contraction. The polypeptide is Myosin regulatory light chain 11 (MYL11) (Oryctolagus cuniculus (Rabbit)).